Here is a 270-residue protein sequence, read N- to C-terminus: NADPH-dependent 7-cyano-7-deazaguanine reductase (270 aa).

79–81 (IES) contacts substrate. An NADPH-binding site is contributed by 81 to 82 (SK). The Thioimide intermediate role is filled by cysteine 177. Aspartate 184 (proton donor) is an active-site residue. Residue 216–217 (HE) participates in substrate binding. 245–246 (RG) is a binding site for NADPH.

It belongs to the GTP cyclohydrolase I family. QueF type 2 subfamily. As to quaternary structure, homodimer.

It localises to the cytoplasm. The enzyme catalyses 7-aminomethyl-7-carbaguanine + 2 NADP(+) = 7-cyano-7-deazaguanine + 2 NADPH + 3 H(+). Its pathway is tRNA modification; tRNA-queuosine biosynthesis. Functionally, catalyzes the NADPH-dependent reduction of 7-cyano-7-deazaguanine (preQ0) to 7-aminomethyl-7-deazaguanine (preQ1). The protein is NADPH-dependent 7-cyano-7-deazaguanine reductase of Acinetobacter baumannii (strain AB307-0294).